The following is a 177-amino-acid chain: Coatomer subunit zeta-1 (177 aa).

An N-acetylmethionine modification is found at Met1.

The protein belongs to the adaptor complexes small subunit family. Oligomeric complex that consists of at least the alpha, beta, beta', gamma, delta, epsilon and zeta subunits.

Its subcellular location is the cytoplasm. The protein localises to the golgi apparatus membrane. It localises to the cytoplasmic vesicle. The protein resides in the COPI-coated vesicle membrane. In terms of biological role, the coatomer is a cytosolic protein complex that binds to dilysine motifs and reversibly associates with Golgi non-clathrin-coated vesicles, which further mediate biosynthetic protein transport from the ER, via the Golgi up to the trans Golgi network. Coatomer complex is required for budding from Golgi membranes, and is essential for the retrograde Golgi-to-ER transport of dilysine-tagged proteins. The zeta subunit may be involved in regulating the coat assembly and, hence, the rate of biosynthetic protein transport due to its association-dissociation properties with the coatomer complex. The chain is Coatomer subunit zeta-1 (COPZ1) from Homo sapiens (Human).